We begin with the raw amino-acid sequence, 634 residues long: MTVASHKETLGFQTEVKQLLNLMIHALYSNKEIFLRELISNGADAADKLRFEALTDDALYEDDSALHIRLSYDKDKRTLTIADNGIGMGRQEVVENIGTIAKSGTRAFLESLSGDQAKDARLIGQFGVGFYSAFIVADKVVLETRRAGFGPEHGVRWESGGAGDYTIETIEKATRGTVVTLHLREGEDEFLDGWRLRHIVTRYSDHIDLPIEIKREIGDEEKSEENGEEWEQINKATALWTLPKNDIKEEEYQAFYKHVAHDFEDPLAWTHNRVEGKLEYTSLLFIPPRAPFDLWERDRTQGIKLYVQRVFIMDDTEQLMPRYLRFVRGVVDSNDLPLNISREILQNNRVIDSIRAGSVKKILGLLEDMAKHEAKKYQSFWKEFGQVMKEGVGEDSGNREQIARLLRFASTHHDTAEQTVSLADYLSRMKEGQDKIYYITADSFPAAKSSPHLEVFRKKGIEVLLLSDRVDEWLVASLPEFEGKSLQSVTKGELDLGHLEDEQEKQQQKEVEEDFQNLVERVKNNLGDKVKEVRVTHRLTDSPVCLVVEQHDMSGYLERLLKEAGQQAPHIQPILELNPAHPIIARLKGEESEENFGDWAHLLFEQALLAEGGRLEEPALFVKRLNSLLLAMAD.

Residues Met-1–Arg-342 are a; substrate-binding. The interval Glu-343–Arg-559 is b. Residues Leu-560 to Asp-634 are c.

The protein belongs to the heat shock protein 90 family. As to quaternary structure, homodimer.

The protein localises to the cytoplasm. Functionally, molecular chaperone. Has ATPase activity. In Nitrosococcus oceani (strain ATCC 19707 / BCRC 17464 / JCM 30415 / NCIMB 11848 / C-107), this protein is Chaperone protein HtpG.